Consider the following 132-residue polypeptide: FPRL1 inhibitory protein (132 aa).

The N-terminal stretch at 1–28 (MKKNITKVIIASTVIATGLLTQTNDAKA) is a signal peptide.

The protein belongs to the CHIPS/FLIPr family.

It is found in the secreted. Its function is as follows. May be involved in countering the first line of host defense mechanisms. Impairs the leukocyte response to FPRL1 agonists by binding directly to host FPRL1. In Staphylococcus aureus (strain MW2), this protein is FPRL1 inhibitory protein (flr).